We begin with the raw amino-acid sequence, 130 residues long: Iron-sulfur cluster insertion protein ErpA (130 aa).

Iron-sulfur cluster is bound by residues C58, C122, and C124.

This sequence belongs to the HesB/IscA family. In terms of assembly, homodimer. Requires iron-sulfur cluster as cofactor.

Its function is as follows. Required for insertion of 4Fe-4S clusters for at least IspG. This is Iron-sulfur cluster insertion protein ErpA from Stenotrophomonas maltophilia (strain K279a).